Consider the following 381-residue polypeptide: Mannitol-1-phosphate 5-dehydrogenase (381 aa).

3–14 (TLHFGAGNIGRG) is an NAD(+) binding site.

This sequence belongs to the mannitol dehydrogenase family.

The enzyme catalyses D-mannitol 1-phosphate + NAD(+) = beta-D-fructose 6-phosphate + NADH + H(+). This is Mannitol-1-phosphate 5-dehydrogenase from Aeromonas salmonicida (strain A449).